A 318-amino-acid chain; its full sequence is Isoeugenol synthase 1 (318 aa).

NADP(+)-binding positions include 10 to 13 (TGYI), 32 to 43 (ARPLTPDSTPSS), R33, 84 to 86 (VPM), 109 to 111 (SEF), K131, and 151 to 153 (NCF). K131 acts as the Proton donor/acceptor in catalysis. Residue P260 coordinates substrate.

The protein belongs to the NmrA-type oxidoreductase family. In terms of tissue distribution, mostly expressed in petals, and, to a lower extent, in sepals, stamens and pistils.

It catalyses the reaction (E)-isoeugenol + acetate + NADP(+) = (E)-coniferyl acetate + NADPH. It functions in the pathway aromatic compound metabolism; phenylpropanoid biosynthesis. Functionally, catalyzes the synthesis of the phenylpropene isoeugenol from coniferyl acetate. Phenylpropenes are the primary constituents of various essential plant oils. They are produced as antimicrobial and antianimal compounds, or as floral attractants of pollinators. Isoeugenol is a characteristic aromatic constituent of spices and a floral volatile compound. The chain is Isoeugenol synthase 1 from Clarkia breweri (Fairy fans).